The following is a 338-amino-acid chain: m7GpppX diphosphatase (338 aa).

The interval Met1–Ser36 is disordered. Ala2 carries the post-translational modification N-acetylalanine. Residues Lys9 to Arg12 carry the nuclear localization signal (NLS) motif. 2 positions are modified to phosphoserine: Ser23 and Ser100. Lys137 and Lys141 each carry N6-acetyllysine. A nuclear export sequence (NES) motif is present at residues Lys141–Thr153. Residues Trp174, Glu184, Asp204, Lys206, and His267–His278 contribute to the substrate site. The short motif at His274–His278 is the Histidine triad motif element. The Nucleophile role is filled by His276.

This sequence belongs to the HIT family. In terms of assembly, homodimer. Associates with components of the exosome multienzyme ribonuclease complex, such as EXOSC3 and EXOSC4. Interacts with NDOR1.

The protein resides in the cytoplasm. It localises to the nucleus. The catalysed reaction is a 5'-end (N(7)-methyl 5'-triphosphoguanosine)-ribonucleoside in mRNA + H2O = N(7)-methyl-GMP + a 5'-end diphospho-ribonucleoside in mRNA + 2 H(+). With respect to regulation, the hydrolytic product 7-methylguanosine diphosphate (m7GDP) efficiently inhibits the decapping scavenger activity and acts as a competitive inhibitor in vitro. Inhibited by 2,4-diaminoquinazoline. In terms of biological role, decapping scavenger enzyme that catalyzes the cleavage of a residual cap structure following the degradation of mRNAs by the 3'-&gt;5' exosome-mediated mRNA decay pathway. Hydrolyzes cap analog structures like 7-methylguanosine nucleoside triphosphate (m7GpppG) with up to 10 nucleotide substrates (small capped oligoribonucleotides) and specifically releases 5'-phosphorylated RNA fragments and 7-methylguanosine monophosphate (m7GMP). Cleaves cap analog structures like tri-methyl guanosine nucleoside triphosphate (m3(2,2,7)GpppG) with very poor efficiency. Does not hydrolyze unmethylated cap analog (GpppG) and shows no decapping activity on intact m7GpppG-capped mRNA molecules longer than 25 nucleotides. Does not hydrolyze 7-methylguanosine diphosphate (m7GDP) to m7GMP. May also play a role in the 5'-&gt;3 mRNA decay pathway; m7GDP, the downstream product released by the 5'-&gt;3' mRNA mediated decapping activity, may be also converted by DCPS to m7GMP. Binds to m7GpppG and strongly to m7GDP. Plays a role in first intron splicing of pre-mRNAs. Inhibits activation-induced cell death. The protein is m7GpppX diphosphatase (Dcps) of Mus musculus (Mouse).